The primary structure comprises 403 residues: Coenzyme A biosynthesis bifunctional protein CoaBC (403 aa).

The segment at 1-197 (MLHHVKLIYA…LHPKSLEGKR (197 aa)) is phosphopantothenoylcysteine decarboxylase. A phosphopantothenate--cysteine ligase region spans residues 198 to 403 (VLVTAGATRE…RLWDEIEKML (206 aa)). Residues Asp-287, Lys-297, and Phe-330 each coordinate CTP.

The protein in the N-terminal section; belongs to the HFCD (homo-oligomeric flavin containing Cys decarboxylase) superfamily. This sequence in the C-terminal section; belongs to the PPC synthetase family. The cofactor is Mg(2+). Requires FMN as cofactor.

The enzyme catalyses N-[(R)-4-phosphopantothenoyl]-L-cysteine + H(+) = (R)-4'-phosphopantetheine + CO2. It catalyses the reaction (R)-4'-phosphopantothenate + L-cysteine + CTP = N-[(R)-4-phosphopantothenoyl]-L-cysteine + CMP + diphosphate + H(+). The protein operates within cofactor biosynthesis; coenzyme A biosynthesis. In terms of biological role, catalyzes two sequential steps in the biosynthesis of coenzyme A. In the first step cysteine is conjugated to 4'-phosphopantothenate to form 4-phosphopantothenoylcysteine. In the second step the latter compound is decarboxylated to form 4'-phosphopantotheine. In Thermococcus kodakarensis (strain ATCC BAA-918 / JCM 12380 / KOD1) (Pyrococcus kodakaraensis (strain KOD1)), this protein is Coenzyme A biosynthesis bifunctional protein CoaBC.